Reading from the N-terminus, the 270-residue chain is LIM zinc-binding domain-containing Nebulette (270 aa).

The LIM zinc-binding domain occupies 3–63 (PQCARCGKVV…NAHYPKQSFT (61 aa)). One copy of the Nebulin 1 repeat lies at 61–95 (SFTTVADTPENLRLKQQSELQSQVKYKRDFEESKG). At Arg-96 the chain carries Omega-N-methylarginine. One copy of the Nebulin 2 repeat lies at 97-131 (GFSIVTDTPELQRLKRTQEQISNVKYHEDFEKTKG). Omega-N-methylarginine is present on Arg-132. One copy of the Nebulin 3 repeat lies at 133–159 (GFTPVVDDPVTERVRKSTQVVSDAAYK). A Phosphothreonine modification is found at Thr-135. The SH3 domain occupies 210–270 (AHLRTYRAMY…LPANYIEFVN (61 aa)). Position 230 is a phosphoserine (Ser-230).

Its subcellular location is the cytoplasm. In terms of biological role, binds to actin and plays an important role in the assembly of the Z-disk. Isoform 2 might play a role in the assembly of focal adhesion. The sequence is that of LIM zinc-binding domain-containing Nebulette (Nebl) from Mus musculus (Mouse).